Here is a 156-residue protein sequence, read N- to C-terminus: Transcription elongation factor GreA (156 aa).

The stretch at 2–27 forms a coiled coil; sequence EKTFPMTKEGLDKLKAELENLKLVKR.

The protein belongs to the GreA/GreB family.

In terms of biological role, necessary for efficient RNA polymerase transcription elongation past template-encoded arresting sites. The arresting sites in DNA have the property of trapping a certain fraction of elongating RNA polymerases that pass through, resulting in locked ternary complexes. Cleavage of the nascent transcript by cleavage factors such as GreA or GreB allows the resumption of elongation from the new 3'terminus. GreA releases sequences of 2 to 3 nucleotides. The chain is Transcription elongation factor GreA from Lactococcus lactis subsp. cremoris (strain MG1363).